The sequence spans 470 residues: Ribosomal protein uS12 methylthiotransferase RimO (470 aa).

The interval 1–27 (MPCQAPHSDSNVKNPSEATNQKDHSPR) is disordered. Polar residues predominate over residues 7–19 (HSDSNVKNPSEAT). Residues 26-141 (PRVGFVSLGC…VMQAVHTHLP (116 aa)) form the MTTase N-terminal domain. The [4Fe-4S] cluster site is built by Cys35, Cys71, Cys100, Cys172, Cys176, and Cys179. A Radical SAM core domain is found at 158 to 399 (LTPKHYAYLK…MEVAEAVSAR (242 aa)). The region spanning 402 to 470 (QRKVGQTLRV…ADGHDLWGEV (69 aa)) is the TRAM domain.

Belongs to the methylthiotransferase family. RimO subfamily. It depends on [4Fe-4S] cluster as a cofactor.

The protein resides in the cytoplasm. It carries out the reaction L-aspartate(89)-[ribosomal protein uS12]-hydrogen + (sulfur carrier)-SH + AH2 + 2 S-adenosyl-L-methionine = 3-methylsulfanyl-L-aspartate(89)-[ribosomal protein uS12]-hydrogen + (sulfur carrier)-H + 5'-deoxyadenosine + L-methionine + A + S-adenosyl-L-homocysteine + 2 H(+). Catalyzes the methylthiolation of an aspartic acid residue of ribosomal protein uS12. The chain is Ribosomal protein uS12 methylthiotransferase RimO from Cupriavidus taiwanensis (strain DSM 17343 / BCRC 17206 / CCUG 44338 / CIP 107171 / LMG 19424 / R1) (Ralstonia taiwanensis (strain LMG 19424)).